A 72-amino-acid chain; its full sequence is Small proline-rich protein 2E (72 aa).

Residues 1 to 11 (MSYQQQQCKQP) are compositionally biased toward low complexity. Positions 1 to 20 (MSYQQQQCKQPCQPPPVCPT) are disordered. Tandem repeats lie at residues 21–29 (PKCPEPCPP), 30–38 (PKCPEPCPP), and 39–47 (PKCPQPCPP). The tract at residues 21 to 47 (PKCPEPCPPPKCPEPCPPPKCPQPCPP) is 3 X 9 AA tandem repeats of P-K-C-P-[EQ]-P-C-P-P. The segment at 42-72 (PQPCPPQQCQQKCPPVTPSPPCQPKCPPKSK) is disordered. The span at 56–72 (PVTPSPPCQPKCPPKSK) shows a compositional bias: pro residues.

This sequence belongs to the cornifin (SPRR) family.

It is found in the cytoplasm. Its function is as follows. Cross-linked envelope protein of keratinocytes. It is a keratinocyte protein that first appears in the cell cytosol, but ultimately becomes cross-linked to membrane proteins by transglutaminase. All that results in the formation of an insoluble envelope beneath the plasma membrane. The sequence is that of Small proline-rich protein 2E (SPRR2E) from Homo sapiens (Human).